A 461-amino-acid chain; its full sequence is ATP synthase subunit beta (461 aa).

149 to 156 (GGAGVGKT) lines the ATP pocket.

This sequence belongs to the ATPase alpha/beta chains family. In terms of assembly, F-type ATPases have 2 components, CF(1) - the catalytic core - and CF(0) - the membrane proton channel. CF(1) has five subunits: alpha(3), beta(3), gamma(1), delta(1), epsilon(1). CF(0) has three main subunits: a(1), b(2) and c(9-12). The alpha and beta chains form an alternating ring which encloses part of the gamma chain. CF(1) is attached to CF(0) by a central stalk formed by the gamma and epsilon chains, while a peripheral stalk is formed by the delta and b chains.

It is found in the cell membrane. It carries out the reaction ATP + H2O + 4 H(+)(in) = ADP + phosphate + 5 H(+)(out). Functionally, produces ATP from ADP in the presence of a proton gradient across the membrane. The catalytic sites are hosted primarily by the beta subunits. The sequence is that of ATP synthase subunit beta from Caldanaerobacter subterraneus subsp. tengcongensis (strain DSM 15242 / JCM 11007 / NBRC 100824 / MB4) (Thermoanaerobacter tengcongensis).